We begin with the raw amino-acid sequence, 210 residues long: MATRSKSSQRWLKEHFSDPFVKKAQAEGMRSRAAYKLEELLERDRLLKPHMVVVDLGAAPGGWSQQVRRQIGDTGRVLALDILDMPPLAGVEFLHGDFREETVLSQFEAMLGDQPVDLVLSDMAPNKSGVGAVDQPRMMHLAELALDFADNHLKTGGAFLIKLFQGEGFDDYVRDMRRRYDKVSIRKPEASRKRSPEVYALGQGKRAHMK.

Residues Gly61, Trp63, Asp81, Asp97, and Asp122 each coordinate S-adenosyl-L-methionine. Lys162 functions as the Proton acceptor in the catalytic mechanism. Residues 187 to 196 (KPEASRKRSP) are compositionally biased toward basic and acidic residues. The tract at residues 187–210 (KPEASRKRSPEVYALGQGKRAHMK) is disordered.

This sequence belongs to the class I-like SAM-binding methyltransferase superfamily. RNA methyltransferase RlmE family.

It localises to the cytoplasm. The enzyme catalyses uridine(2552) in 23S rRNA + S-adenosyl-L-methionine = 2'-O-methyluridine(2552) in 23S rRNA + S-adenosyl-L-homocysteine + H(+). Functionally, specifically methylates the uridine in position 2552 of 23S rRNA at the 2'-O position of the ribose in the fully assembled 50S ribosomal subunit. This chain is Ribosomal RNA large subunit methyltransferase E, found in Stenotrophomonas maltophilia (strain R551-3).